We begin with the raw amino-acid sequence, 429 residues long: Adenylosuccinate synthetase (429 aa).

GTP-binding positions include 12–18 (GDEGKGK) and 40–42 (GHT). Catalysis depends on Asp-13, which acts as the Proton acceptor. Positions 13 and 40 each coordinate Mg(2+). Residues 13–16 (DEGK), 38–41 (NAGH), Thr-129, Arg-143, Gln-223, Thr-238, and Arg-302 each bind IMP. The active-site Proton donor is the His-41. Substrate is bound at residue 298–304 (TVTGRKR). GTP contacts are provided by residues Arg-304, 330 to 332 (KLD), and 412 to 414 (STS).

This sequence belongs to the adenylosuccinate synthetase family. Homodimer. Mg(2+) serves as cofactor.

The protein resides in the cytoplasm. The enzyme catalyses IMP + L-aspartate + GTP = N(6)-(1,2-dicarboxyethyl)-AMP + GDP + phosphate + 2 H(+). The protein operates within purine metabolism; AMP biosynthesis via de novo pathway; AMP from IMP: step 1/2. In terms of biological role, plays an important role in the de novo pathway of purine nucleotide biosynthesis. Catalyzes the first committed step in the biosynthesis of AMP from IMP. The chain is Adenylosuccinate synthetase from Rhizorhabdus wittichii (strain DSM 6014 / CCUG 31198 / JCM 15750 / NBRC 105917 / EY 4224 / RW1) (Sphingomonas wittichii).